A 93-amino-acid chain; its full sequence is Small ribosomal subunit protein uS19 (93 aa).

This sequence belongs to the universal ribosomal protein uS19 family.

Its function is as follows. Protein S19 forms a complex with S13 that binds strongly to the 16S ribosomal RNA. The chain is Small ribosomal subunit protein uS19 from Renibacterium salmoninarum (strain ATCC 33209 / DSM 20767 / JCM 11484 / NBRC 15589 / NCIMB 2235).